Reading from the N-terminus, the 354-residue chain is Uroporphyrinogen decarboxylase (354 aa).

Substrate is bound by residues 25–29 (RQAGR), phenylalanine 44, aspartate 75, tyrosine 152, threonine 207, and histidine 330.

It belongs to the uroporphyrinogen decarboxylase family. Homodimer.

Its subcellular location is the cytoplasm. It carries out the reaction uroporphyrinogen III + 4 H(+) = coproporphyrinogen III + 4 CO2. Its pathway is porphyrin-containing compound metabolism; protoporphyrin-IX biosynthesis; coproporphyrinogen-III from 5-aminolevulinate: step 4/4. Functionally, catalyzes the decarboxylation of four acetate groups of uroporphyrinogen-III to yield coproporphyrinogen-III. The chain is Uroporphyrinogen decarboxylase from Xanthomonas axonopodis pv. citri (strain 306).